The following is a 274-amino-acid chain: Large ribosomal subunit protein uL2 (274 aa).

2 disordered regions span residues 28-54 and 224-274; these read APHA…TRHI and VAMN…RRRK. Basic and acidic residues predominate over residues 263 to 274; that stretch reads KRTDKMIVRRRK.

This sequence belongs to the universal ribosomal protein uL2 family. Part of the 50S ribosomal subunit. Forms a bridge to the 30S subunit in the 70S ribosome.

One of the primary rRNA binding proteins. Required for association of the 30S and 50S subunits to form the 70S ribosome, for tRNA binding and peptide bond formation. It has been suggested to have peptidyltransferase activity; this is somewhat controversial. Makes several contacts with the 16S rRNA in the 70S ribosome. The protein is Large ribosomal subunit protein uL2 of Pseudomonas syringae pv. tomato (strain ATCC BAA-871 / DC3000).